A 247-amino-acid chain; its full sequence is Diglucosylglycerate octanoyltransferase (247 aa).

Belongs to the OctT acyltransferase family. As to quaternary structure, homotetramer.

It carries out the reaction (2R)-2-O-[alpha-D-glucopyranosyl-(1-&gt;6)-alpha-D-glucopyranosyl]-glycerate + octanoyl-CoA = (2R)-2-O-[6-O-octanoyl-alpha-D-glucopyranosyl-(1-&gt;6)-alpha-D-glucopyranosyl]-glycerate + CoA. Sugar octanoyltransferase likely involved in the biosynthesis of mycobacterial methylglucose lipopolysaccharide (MGLP). Catalyzes the transfer of an octanoyl group from octanoyl-CoA to the C6 OH of the second glucose in diglucosylglycerate (DGG). DGG is the preferred acceptor, but to a lesser extent, GG (glucosylglycerate) can also be used as substrate. DGG and GG are the two earliest intermediates in MGLP biosynthesis. The protein is Diglucosylglycerate octanoyltransferase of Mycobacterium tuberculosis (strain ATCC 25618 / H37Rv).